The chain runs to 121 residues: UPF0212 protein VNG_0879C (121 aa).

Belongs to the UPF0212 family.

This is UPF0212 protein VNG_0879C from Halobacterium salinarum (strain ATCC 700922 / JCM 11081 / NRC-1) (Halobacterium halobium).